The following is a 61-amino-acid chain: LKCHNKLVPFLSKTCPEGKNLCYKMTMLKMPKIPIKRGCTDACPKSSLLVKVVCCNKDKCN.

Intrachain disulfides connect C3–C22, C15–C39, C43–C54, and C55–C60.

This sequence belongs to the three-finger toxin family. Short-chain subfamily. Type IB cytotoxin sub-subfamily. Expressed by the venom gland.

It is found in the secreted. Functionally, this protein lyses red blood cells and has cardiotoxic and hypotensive activities. The sequence is that of Cytotoxin 1 from Hemachatus haemachatus (Rinkhals).